The following is a 221-amino-acid chain: MFQSSIYNKNYKKFLKNLKYQGEYAVTLGILAISILLLTGFNQFLNTKPTLKKNYFLNQKSIKNTLKNWNDIIATTANKYKVDEKLIKSIVYVESSGNPYAKSQSNAIGLMQIKPSSAGAEVYRLNGKKGRPSIQELYDPKTNIDIGTSYISFLQKKFISIKNKDVMRYAIIVAYVNGTSALLKTFSKSRKEAINIINTMTKKSFCTHIKKNTRQCKHFVI.

This sequence belongs to the transglycosylase Slt family.

It catalyses the reaction Exolytic cleavage of the (1-&gt;4)-beta-glycosidic linkage between N-acetylmuramic acid (MurNAc) and N-acetylglucosamine (GlcNAc) residues in peptidoglycan, from either the reducing or the non-reducing ends of the peptidoglycan chains, with concomitant formation of a 1,6-anhydrobond in the MurNAc residue.. In terms of biological role, murein-degrading enzyme. May play a role in recycling of muropeptides during cell elongation and/or cell division. This is Membrane-bound lytic murein transglycosylase E (mltE) from Buchnera aphidicola subsp. Acyrthosiphon pisum (strain APS) (Acyrthosiphon pisum symbiotic bacterium).